The sequence spans 242 residues: MALVLPLLPLLLSKVQGNPEVSLEGSPGDRVNLSCIGVSDPTRWAWAPSFPACKGLSKGRRPILWASTRGTPTVLQHFSGRLRSLDNGIKRLELLLSAGDSGTFFCKGRHENESRTVLQVLGDKAGCRPAGSTHGYEYPKVLIPLLGVGLVLGLGVAGVVWRRRRLSPPPPPPPPPGPLPTFAPVINAEPQRPLEQESKISGHLDQEPSLHYADLDHSVLGRHRRMSTVVSGDASTVYAVVV.

A signal peptide spans 1–17 (MALVLPLLPLLLSKVQG). N-linked (GlcNAc...) asparagine glycosylation is found at asparagine 32 and asparagine 112. A helical membrane pass occupies residues 141 to 161 (VLIPLLGVGLVLGLGVAGVVW). 2 short sequence motifs (ITIM motif) span residues 210–215 (LHYADL) and 236–241 (TVYAVV). Residue tyrosine 212 is modified to Phosphotyrosine.

Interacts (via ITIM motif) with PTPN6 and PTPN11. Binds to heparin. In terms of processing, N-glycosylated. Post-translationally, may be O-glycosylated. Phosphorylated. As to expression, expressed in mature megakaryocytes and platelets. Not expressed by immature megakaryocytes.

The protein resides in the cell membrane. In terms of biological role, inhibitory receptor that acts as a critical regulator of hematopoietic lineage differentiation, megakaryocyte function and platelet production. Inhibits platelet aggregation and activation by agonists such as ADP and collagen-related peptide. This regulation of megakaryocate function as well as platelet production ann activation is done through the inhibition (via the 2 ITIM motifs) of the receptors CLEC1B and GP6:FcRgamma signaling. Appears to operate in a calcium-independent manner. The sequence is that of Megakaryocyte and platelet inhibitory receptor G6b from Mus musculus (Mouse).